The sequence spans 263 residues: uncharacterized protein (263 aa).

The N-terminal stretch at 1 to 22 (MEYLKRLALLISVIILTIFIMG) is a signal peptide. A lipid anchor (N-palmitoyl cysteine) is attached at Cys-23. Residue Cys-23 is the site of S-diacylglycerol cysteine attachment.

The protein belongs to the staphylococcal tandem lipoprotein family.

Its subcellular location is the cell membrane. This is an uncharacterized protein from Staphylococcus aureus (strain COL).